The sequence spans 571 residues: Proline--tRNA ligase (571 aa).

This sequence belongs to the class-II aminoacyl-tRNA synthetase family. ProS type 1 subfamily. Homodimer.

Its subcellular location is the cytoplasm. The enzyme catalyses tRNA(Pro) + L-proline + ATP = L-prolyl-tRNA(Pro) + AMP + diphosphate. In terms of biological role, catalyzes the attachment of proline to tRNA(Pro) in a two-step reaction: proline is first activated by ATP to form Pro-AMP and then transferred to the acceptor end of tRNA(Pro). As ProRS can inadvertently accommodate and process non-cognate amino acids such as alanine and cysteine, to avoid such errors it has two additional distinct editing activities against alanine. One activity is designated as 'pretransfer' editing and involves the tRNA(Pro)-independent hydrolysis of activated Ala-AMP. The other activity is designated 'posttransfer' editing and involves deacylation of mischarged Ala-tRNA(Pro). The misacylated Cys-tRNA(Pro) is not edited by ProRS. This is Proline--tRNA ligase from Pseudomonas aeruginosa (strain UCBPP-PA14).